A 518-amino-acid chain; its full sequence is Filamentous growth regulator 15 (518 aa).

The span at 1 to 41 (MESTLSVSDEKLTNSSTALNNCGDNKESSQVLTTANTTTDN) shows a compositional bias: polar residues. 3 disordered regions span residues 1-63 (MEST…SKER), 75-101 (VDPNQQSKNTVSDSVQDTTGVPSDHGK), and 261-307 (KSRS…KQHR). Positions 42-52 (QQVQPKSQHQQ) are enriched in low complexity. A compositionally biased stretch (polar residues) spans 77–95 (PNQQSKNTVSDSVQDTTGV). Residues 262–274 (SRSRSKVTKKRKV) are compositionally biased toward basic residues. Residues 283 to 298 (SNTATATTSVTTPDAN) are compositionally biased toward low complexity. Residues 374-406 (HECQLPSAEEPHKLCLRRFSRKYELIRHQETVH) form a C2H2-type zinc finger. Residues 492 to 518 (RKSSGDDTNYMETSDLESGEEEVTFNK) are disordered. The span at 505–518 (SDLESGEEEVTFNK) shows a compositional bias: acidic residues.

Its subcellular location is the nucleus. Probable transcription factor involved in the regulation of filamentous growth. The sequence is that of Filamentous growth regulator 15 (FGR15) from Candida albicans (strain SC5314 / ATCC MYA-2876) (Yeast).